A 501-amino-acid polypeptide reads, in one-letter code: ATP synthase subunit alpha (501 aa).

169 to 176 (GDRQTGKT) contributes to the ATP binding site.

It belongs to the ATPase alpha/beta chains family. F-type ATPases have 2 components, CF(1) - the catalytic core - and CF(0) - the membrane proton channel. CF(1) has five subunits: alpha(3), beta(3), gamma(1), delta(1), epsilon(1). CF(0) has three main subunits: a(1), b(2) and c(9-12). The alpha and beta chains form an alternating ring which encloses part of the gamma chain. CF(1) is attached to CF(0) by a central stalk formed by the gamma and epsilon chains, while a peripheral stalk is formed by the delta and b chains.

It localises to the cell membrane. The enzyme catalyses ATP + H2O + 4 H(+)(in) = ADP + phosphate + 5 H(+)(out). In terms of biological role, produces ATP from ADP in the presence of a proton gradient across the membrane. The alpha chain is a regulatory subunit. In Streptococcus pneumoniae (strain 70585), this protein is ATP synthase subunit alpha.